A 131-amino-acid polypeptide reads, in one-letter code: Methylglyoxal synthase (131 aa).

In terms of domain architecture, MGS-like spans 1 to 131 (MKIALIAHDK…GDLDYRKFRK (131 aa)). Residues H8, K12, 34–37 (TGTT), and 54–55 (SG) each bind substrate. The Proton donor/acceptor role is filled by D60. A substrate-binding site is contributed by H87.

Belongs to the methylglyoxal synthase family.

The catalysed reaction is dihydroxyacetone phosphate = methylglyoxal + phosphate. Functionally, catalyzes the formation of methylglyoxal from dihydroxyacetone phosphate. This is Methylglyoxal synthase from Bacillus cytotoxicus (strain DSM 22905 / CIP 110041 / 391-98 / NVH 391-98).